Reading from the N-terminus, the 492-residue chain is MTLWINGDWVTGQGALRVKRNPVSGEVLWQGNDADAAQVGQACRAARAAFPRWARLSFGDRQVRVECFAGLLESNKAELTAIIARETGKPRWESATEVTAMINKIAISIKAYHVRTGEQRSEMPDGAASLRHRPHGVLAVFGPYNFPGHLPNGHIVPALLAGNTIIFKPSELTPWSGEAVMRLWQQAGLPPGVLNLVQGGRETGQALSALEDLDGLLFTGSANTGYQLHRQLSGQPEKILALEMGGNNPLIIDEVADIDAAVHLTIQSAFVTAGQRCTCARRLFLKSGTQGDAFLARLVAVSQRLTPGTWDDEPQPFIGGLISEQAAQQVVTAWQELEAMGGRTLLAPRLLQAGTSLLTPGIIEMTGVTGVPDEEVFGPLLRVWRYDNFDEAIRMANNTRFGLSCGLVSPEREKFDQLLLEARAGIVNWNKPLTGAASTAPFGGIGASGNHRPSAWYAADYCAWPMASLESDSLTLPATLNPGLDFSDEVVR.

220–225 (GSANTG) contributes to the NAD(+) binding site. Active-site residues include Glu-243 and Cys-277.

It belongs to the aldehyde dehydrogenase family. AstD subfamily.

It carries out the reaction N-succinyl-L-glutamate 5-semialdehyde + NAD(+) + H2O = N-succinyl-L-glutamate + NADH + 2 H(+). It functions in the pathway amino-acid degradation; L-arginine degradation via AST pathway; L-glutamate and succinate from L-arginine: step 4/5. Its function is as follows. Catalyzes the NAD-dependent reduction of succinylglutamate semialdehyde into succinylglutamate. In Escherichia coli O127:H6 (strain E2348/69 / EPEC), this protein is N-succinylglutamate 5-semialdehyde dehydrogenase.